Reading from the N-terminus, the 573-residue chain is Sulfate adenylyltransferase (573 aa).

The interval 1-169 (MSNPPHGGVL…LEAVNKLQHY (169 aa)) is N-terminal. Residues 170 to 394 (DFVDLRYSPA…LRESHPPRSQ (225 aa)) form a catalytic region. Gln197 contacts sulfate. ATP contacts are provided by residues 197–200 (QTRN) and 291–294 (GRDH). Active-site residues include Thr198, Arg199, and Asn200. Arg199 provides a ligand contact to sulfate. Ala295 is a binding site for sulfate. Met333 is a binding site for ATP. Residues 395 to 573 (QGFTVLFTGY…LESQGLLDRF (179 aa)) are allosteric regulation domain; adenylyl-sulfate kinase-like. 3'-phosphoadenylyl sulfate-binding positions include 434 to 437 (ENIR), Arg451, 477 to 478 (IA), and Arg515.

This sequence in the N-terminal section; belongs to the sulfate adenylyltransferase family. It in the C-terminal section; belongs to the APS kinase family. In terms of assembly, homohexamer. Dimer of trimers.

The protein localises to the cytoplasm. The catalysed reaction is sulfate + ATP + H(+) = adenosine 5'-phosphosulfate + diphosphate. It functions in the pathway sulfur metabolism; hydrogen sulfide biosynthesis; sulfite from sulfate: step 1/3. With respect to regulation, allosterically inhibited by 3'-phosphoadenosine 5'-phosphosulfate (PAPS). Functionally, catalyzes the first intracellular reaction of sulfate assimilation, forming adenosine-5'-phosphosulfate (APS) from inorganic sulfate and ATP. Plays an important role in sulfate activation as a component of the biosynthesis pathway of sulfur-containing amino acids. This is Sulfate adenylyltransferase (cys-11) from Neurospora crassa (strain ATCC 24698 / 74-OR23-1A / CBS 708.71 / DSM 1257 / FGSC 987).